The sequence spans 326 residues: MNTPTATLNAPAADAESAAASAADKKAAFELNKLSKRLHRQVGQAITDFNMIQEGDRVMVCLSGGKDSYGMLDILLGLQQRAPITFSIVAVNLDQKQPGFPEHILPAYLKARGVEFHIENQDTYSIVKRVIPEGKTMCSLCSRLRRGILYRVADELGATKIALGHHRDDFLGTVFLNMFFGSKLKGMPPKLVSDDGRHTVIRPLAYVAETDLERWAEHRAFPIIPCTLCGTQDNLQRVQIKHMLRDWDQRFPGRIDNMHRAFSQVVPSHLMDRALFPFETLVPTGVADPAGDRAFDEDDSELCAPSGSADAAGDEVSVPVALIRRV.

The short motif at 63 to 68 is the PP-loop motif element; sequence SGGKDS. Positions 138, 141, and 229 each coordinate [4Fe-4S] cluster.

Belongs to the TtcA family. In terms of assembly, homodimer. Mg(2+) is required as a cofactor. The cofactor is [4Fe-4S] cluster.

It is found in the cytoplasm. The enzyme catalyses cytidine(32) in tRNA + S-sulfanyl-L-cysteinyl-[cysteine desulfurase] + AH2 + ATP = 2-thiocytidine(32) in tRNA + L-cysteinyl-[cysteine desulfurase] + A + AMP + diphosphate + H(+). The protein operates within tRNA modification. In terms of biological role, catalyzes the ATP-dependent 2-thiolation of cytidine in position 32 of tRNA, to form 2-thiocytidine (s(2)C32). The sulfur atoms are provided by the cysteine/cysteine desulfurase (IscS) system. The polypeptide is tRNA-cytidine(32) 2-sulfurtransferase (Leptothrix cholodnii (strain ATCC 51168 / LMG 8142 / SP-6) (Leptothrix discophora (strain SP-6))).